A 222-amino-acid polypeptide reads, in one-letter code: ATP-dependent Clp protease proteolytic subunit 1 (222 aa).

Ser-121 acts as the Nucleophile in catalysis. His-146 is an active-site residue.

The protein belongs to the peptidase S14 family. Fourteen ClpP subunits assemble into 2 heptameric rings which stack back to back to give a disk-like structure with a central cavity, resembling the structure of eukaryotic proteasomes.

The protein localises to the cytoplasm. It carries out the reaction Hydrolysis of proteins to small peptides in the presence of ATP and magnesium. alpha-casein is the usual test substrate. In the absence of ATP, only oligopeptides shorter than five residues are hydrolyzed (such as succinyl-Leu-Tyr-|-NHMec, and Leu-Tyr-Leu-|-Tyr-Trp, in which cleavage of the -Tyr-|-Leu- and -Tyr-|-Trp bonds also occurs).. In terms of biological role, cleaves peptides in various proteins in a process that requires ATP hydrolysis. Has a chymotrypsin-like activity. Plays a major role in the degradation of misfolded proteins. The chain is ATP-dependent Clp protease proteolytic subunit 1 from Thermobifida fusca (strain YX).